We begin with the raw amino-acid sequence, 421 residues long: Testin (421 aa).

In terms of domain architecture, PET spans Met-92 to Asn-199. Disordered regions lie at residues Glu-133–Cys-164 and Lys-193–Arg-213. The segment covering Pro-155 to Cys-164 has biased composition (basic and acidic residues). 3 consecutive LIM zinc-binding domains span residues Tyr-234–Glu-297, Pro-299–Val-359, and Gln-362–Ser-421.

Belongs to the prickle / espinas / testin family. Interacts via LIM domain 1 with ZYX. Interacts (via LIM domain 3) with ENAH and VASP. Interacts with ALKBH4, talin, actin, alpha-actinin, GRIP1 and PXN. Interacts (via LIM domain 2) with ACTL7A (via N-terminus). Heterodimer with ACTL7A; the heterodimer interacts with ENAH to form a heterotrimer.

It localises to the cytoplasm. The protein localises to the cell junction. It is found in the focal adhesion. Functionally, scaffold protein that may play a role in cell adhesion, cell spreading and in the reorganization of the actin cytoskeleton. Plays a role in the regulation of cell proliferation. May act as a tumor suppressor. The chain is Testin (TES) from Ovis aries (Sheep).